The chain runs to 318 residues: Ribosomal RNA small subunit methyltransferase H (318 aa).

Residues 35-37 (AGH), aspartate 55, phenylalanine 84, aspartate 105, and glutamine 112 contribute to the S-adenosyl-L-methionine site. Residues 294-318 (SDSELSENNRSRSAKLRIAEKIKSR) form a disordered region.

The protein belongs to the methyltransferase superfamily. RsmH family.

The protein resides in the cytoplasm. It catalyses the reaction cytidine(1402) in 16S rRNA + S-adenosyl-L-methionine = N(4)-methylcytidine(1402) in 16S rRNA + S-adenosyl-L-homocysteine + H(+). Functionally, specifically methylates the N4 position of cytidine in position 1402 (C1402) of 16S rRNA. This chain is Ribosomal RNA small subunit methyltransferase H, found in Enterococcus faecalis (strain ATCC 700802 / V583).